The primary structure comprises 798 residues: Pentatricopeptide repeat-containing protein At5g67570, chloroplastic (798 aa).

Disordered regions lie at residues 1 to 21 and 50 to 73; these read MDAS…EFEP and IQKH…EAQK. PPR repeat units lie at residues 254–284, 290–324, 340–374, 375–409, 410–444, 445–480, 481–511, 515–545, 553–587, and 588–622; these read SRFV…MLGD, DMAA…PTKL, DLVV…GLRP, NGAT…GEAP, KAIT…GVIG, TGSV…NCRP, LEIT…MKDK, NIGT…IVSR, NEYT…GYQM, and DQTK…GEIP.

It belongs to the PPR family. P subfamily. As to quaternary structure, interacts (via C-terminus) with SIGF (via N-terminus).

The protein resides in the plastid. It is found in the chloroplast. Involved in the regulation of early chloroplast development and chloroplast gene expression in a SIGF-dependent manner. In Arabidopsis thaliana (Mouse-ear cress), this protein is Pentatricopeptide repeat-containing protein At5g67570, chloroplastic (DG1).